Reading from the N-terminus, the 364-residue chain is DNA polymerase IV (364 aa).

Residues 14 to 198 (IIHIDMDAFF…LPVEKFHGVG (185 aa)) enclose the UmuC domain. Positions 18 and 116 each coordinate Mg(2+). The active site involves Glu117.

It belongs to the DNA polymerase type-Y family. In terms of assembly, monomer. The cofactor is Mg(2+).

Its subcellular location is the cytoplasm. It catalyses the reaction DNA(n) + a 2'-deoxyribonucleoside 5'-triphosphate = DNA(n+1) + diphosphate. In terms of biological role, poorly processive, error-prone DNA polymerase involved in untargeted mutagenesis. Copies undamaged DNA at stalled replication forks, which arise in vivo from mismatched or misaligned primer ends. These misaligned primers can be extended by PolIV. Exhibits no 3'-5' exonuclease (proofreading) activity. May be involved in translesional synthesis, in conjunction with the beta clamp from PolIII. This chain is DNA polymerase IV, found in Lactococcus lactis subsp. cremoris (strain MG1363).